Reading from the N-terminus, the 399-residue chain is Probable WRKY transcription factor 48 (399 aa).

2 stretches are compositionally biased toward basic and acidic residues: residues 1 to 11 (MEKKKEEDHHH) and 19 to 38 (KEIKNTETKIEQEQEQEQKQ). 2 disordered regions span residues 1–57 (MEKK…TSSD) and 138–202 (AESS…KNQK). Residues 143-161 (VVNTTPTSPNSTSVSSSSN) are compositionally biased toward low complexity. Residues 162–171 (EAANDNNSGK) are compositionally biased toward polar residues. Residues 184 to 193 (QQEQKGTKPQ) show a composition bias toward low complexity. Residues 215–280 (SDIDNLDDGY…YEGQHTHPFP (66 aa)) constitute a DNA-binding region (WRKY). Residues 361-399 (QASTSTSSSIRDHGLLQDILPSQIRSDTINTQTNEENKK) are disordered. The segment covering 383-399 (QIRSDTINTQTNEENKK) has biased composition (polar residues).

Its subcellular location is the nucleus. In terms of biological role, transcription factor. Interacts specifically with the W box (5'-(T)TGAC[CT]-3'), a frequently occurring elicitor-responsive cis-acting element. This Arabidopsis thaliana (Mouse-ear cress) protein is Probable WRKY transcription factor 48 (WRKY48).